The chain runs to 139 residues: 6,7-dimethyl-8-ribityllumazine synthase (139 aa).

5-amino-6-(D-ribitylamino)uracil contacts are provided by residues phenylalanine 11, 42 to 44 (ALE), and 66 to 68 (VVI). Position 71-72 (71-72 (ET)) interacts with (2S)-2-hydroxy-3-oxobutyl phosphate. The active-site Proton donor is histidine 74. Asparagine 98 is a 5-amino-6-(D-ribitylamino)uracil binding site. Position 112 (arginine 112) interacts with (2S)-2-hydroxy-3-oxobutyl phosphate.

The protein belongs to the DMRL synthase family.

The catalysed reaction is (2S)-2-hydroxy-3-oxobutyl phosphate + 5-amino-6-(D-ribitylamino)uracil = 6,7-dimethyl-8-(1-D-ribityl)lumazine + phosphate + 2 H2O + H(+). It functions in the pathway cofactor biosynthesis; riboflavin biosynthesis; riboflavin from 2-hydroxy-3-oxobutyl phosphate and 5-amino-6-(D-ribitylamino)uracil: step 1/2. Functionally, catalyzes the formation of 6,7-dimethyl-8-ribityllumazine by condensation of 5-amino-6-(D-ribitylamino)uracil with 3,4-dihydroxy-2-butanone 4-phosphate. This is the penultimate step in the biosynthesis of riboflavin. This Novosphingobium aromaticivorans (strain ATCC 700278 / DSM 12444 / CCUG 56034 / CIP 105152 / NBRC 16084 / F199) protein is 6,7-dimethyl-8-ribityllumazine synthase.